We begin with the raw amino-acid sequence, 144 residues long: Ribosomal RNA large subunit methyltransferase H (144 aa).

S-adenosyl-L-methionine contacts are provided by residues leucine 68, glycine 96, and 112-117 (FSKLTF).

It belongs to the RNA methyltransferase RlmH family. Homodimer.

The protein resides in the cytoplasm. It carries out the reaction pseudouridine(1915) in 23S rRNA + S-adenosyl-L-methionine = N(3)-methylpseudouridine(1915) in 23S rRNA + S-adenosyl-L-homocysteine + H(+). In terms of biological role, specifically methylates the pseudouridine at position 1915 (m3Psi1915) in 23S rRNA. This is Ribosomal RNA large subunit methyltransferase H from Mycoplasmopsis synoviae (strain 53) (Mycoplasma synoviae).